The sequence spans 542 residues: MARYVFITGGVVSSLGKGIAAAALAALLQARGYRVRIRKLDPYLNVDPGTMSPYQHGEVFVTDDGAETDLDLGHYERFTGRPANQQDNITTGRIYRNIIEKERRGDYLGATVQVIPHVTDEIKNFVLEGNEDYDFVLCEIGGTVGDIEAMPFLEAIRQLGNELPRGTAVYIHLTLMPYIPAAGELKTKPTQHSVKELRSIGIAPDILLVRADREIPESDRRKLSLFCNVRESAVIQALDVATIYDVPIAYHKEGLDSEVLSAFGIDPAPKPRMDRWEEVSHRLHNPEGEVTIAVVGKYTGLKDAYKSLIEALHHGGLANKVKVNLDWIEAEVFESEDPAPYLEKVHGILVPGGFGERGAEGKILAAKFARERKVPYFGICFGMQMACIEAARNLVGIEDASSSEFGPTREPVVGLMTEWLKGNMLEKRAAAGDLGGTMRLGAYEAVLKPDSKIAQIYGSTDIHERHRHRYEVNIDYKDRLEAAGLNFAGMSPDGVLPETVEYADHPWFIGVQYHPELKSRPFEPHPLFASFIEAAIEQSRLV.

Positions 1-265 (MARYVFITGG…DSEVLSAFGI (265 aa)) are amidoligase domain. S13 is a binding site for CTP. Residue S13 participates in UTP binding. 14–19 (SLGKGI) lines the ATP pocket. Y54 contacts L-glutamine. D71 contributes to the ATP binding site. 2 residues coordinate Mg(2+): D71 and E139. CTP-binding positions include 146-148 (DIE), 186-191 (KTKPTQ), and K222. UTP contacts are provided by residues 186-191 (KTKPTQ) and K222. The Glutamine amidotransferase type-1 domain maps to 291 to 541 (TIAVVGKYTG…IEAAIEQSRL (251 aa)). G353 serves as a coordination point for L-glutamine. C380 (nucleophile; for glutamine hydrolysis) is an active-site residue. L-glutamine contacts are provided by residues 381–384 (FGMQ), E404, and R469. Catalysis depends on residues H514 and E516.

It belongs to the CTP synthase family. In terms of assembly, homotetramer.

The catalysed reaction is UTP + L-glutamine + ATP + H2O = CTP + L-glutamate + ADP + phosphate + 2 H(+). It catalyses the reaction L-glutamine + H2O = L-glutamate + NH4(+). It carries out the reaction UTP + NH4(+) + ATP = CTP + ADP + phosphate + 2 H(+). It functions in the pathway pyrimidine metabolism; CTP biosynthesis via de novo pathway; CTP from UDP: step 2/2. Allosterically activated by GTP, when glutamine is the substrate; GTP has no effect on the reaction when ammonia is the substrate. The allosteric effector GTP functions by stabilizing the protein conformation that binds the tetrahedral intermediate(s) formed during glutamine hydrolysis. Inhibited by the product CTP, via allosteric rather than competitive inhibition. Catalyzes the ATP-dependent amination of UTP to CTP with either L-glutamine or ammonia as the source of nitrogen. Regulates intracellular CTP levels through interactions with the four ribonucleotide triphosphates. This chain is CTP synthase, found in Brucella abortus (strain 2308).